Here is a 209-residue protein sequence, read N- to C-terminus: Virulence factors putative positive transcription regulator BvgA (209 aa).

Positions 4–119 (KVLIIDDHPV…EVINAAKAVM (116 aa)) constitute a Response regulatory domain. D54 is subject to 4-aspartylphosphate. The HTH luxR-type domain occupies 142-207 (DSTLISVLSN…ELIDLAKRNN (66 aa)). The segment at residues 166–185 (NKDIADSMFLSNKTVSTYKT) is a DNA-binding region (H-T-H motif).

Homodimer. Post-translationally, phosphorylated by BvgS.

Its function is as follows. Member of the two-component regulatory system BvgS/BvgA. Activates the transcription of virulence genes. The sequence is that of Virulence factors putative positive transcription regulator BvgA (bvgA) from Bordetella bronchiseptica (strain ATCC BAA-588 / NCTC 13252 / RB50) (Alcaligenes bronchisepticus).